The chain runs to 509 residues: Maturase K (509 aa).

This sequence belongs to the intron maturase 2 family. MatK subfamily.

Its subcellular location is the plastid. The protein localises to the chloroplast. Its function is as follows. Usually encoded in the trnK tRNA gene intron. Probably assists in splicing its own and other chloroplast group II introns. The polypeptide is Maturase K (Nicotiana bigelovii (Bigelov's tobacco)).